The chain runs to 47 residues: Potassium channel toxin TcoKIK (47 aa).

Positions 14–47 constitute a BetaSPN-type CS-alpha/beta domain; that stretch reads EYACPAIDKFCEDHCAAKKAVGKCDDFKCNCIKL. 3 cysteine pairs are disulfide-bonded: cysteine 17–cysteine 37, cysteine 24–cysteine 42, and cysteine 28–cysteine 44.

Belongs to the long chain scorpion toxin family. Class 2 subfamily. As to expression, expressed by the venom gland.

It localises to the secreted. It is found in the target cell membrane. Blocks voltage-gated potassium channels. Its application (10 uM) to cells recombinantly expressing channels results in membrane damage and cell lysis. The chain is Potassium channel toxin TcoKIK from Tityus costatus (Brazilian scorpion).